The sequence spans 78 residues: Acyl carrier protein (78 aa).

Residues Ala-4–Lys-78 form the Carrier domain. An O-(pantetheine 4'-phosphoryl)serine modification is found at Ser-39.

Belongs to the acyl carrier protein (ACP) family. In terms of processing, 4'-phosphopantetheine is transferred from CoA to a specific serine of apo-ACP by AcpS. This modification is essential for activity because fatty acids are bound in thioester linkage to the sulfhydryl of the prosthetic group.

It is found in the cytoplasm. It participates in lipid metabolism; fatty acid biosynthesis. Its function is as follows. Carrier of the growing fatty acid chain in fatty acid biosynthesis. This chain is Acyl carrier protein, found in Chlorobium luteolum (strain DSM 273 / BCRC 81028 / 2530) (Pelodictyon luteolum).